The following is a 332-amino-acid chain: L-lactate dehydrogenase A chain (332 aa).

An N-acetylalanine modification is found at Ala2. Lys5 carries the N6-acetyllysine; alternate modification. An N6-succinyllysine; alternate modification is found at Lys5. Lys14 is modified (N6-acetyllysine). Gly29–Lys57 is a binding site for NAD(+). An N6-acetyllysine; alternate modification is found at Lys57. Lys57 is covalently cross-linked (Glycyl lysine isopeptide (Lys-Gly) (interchain with G-Cter in SUMO2); alternate). Lys81 is subject to N6-acetyllysine. Arg99 provides a ligand contact to NAD(+). Residue Arg106 coordinates substrate. Lys118 bears the N6-acetyllysine; alternate mark. At Lys118 the chain carries N6-succinyllysine; alternate. Lys126 bears the N6-acetyllysine mark. Asn138 is an NAD(+) binding site. Positions 138 and 169 each coordinate substrate. His193 serves as the catalytic Proton acceptor. 2 positions are modified to N6-acetyllysine: Lys224 and Lys232. Tyr239 carries the phosphotyrosine modification. Lys243 bears the N6-acetyllysine mark. Residue Thr248 coordinates substrate. Residue Thr309 is modified to Phosphothreonine. A Phosphoserine modification is found at Ser310. Lys318 carries the post-translational modification N6-acetyllysine; alternate. An N6-succinyllysine; alternate modification is found at Lys318. Thr322 carries the post-translational modification Phosphothreonine.

Belongs to the LDH/MDH superfamily. LDH family. Homotetramer. Interacts with PTEN upstream reading frame protein MP31. ISGylated.

Its subcellular location is the cytoplasm. It carries out the reaction (S)-lactate + NAD(+) = pyruvate + NADH + H(+). Its pathway is fermentation; pyruvate fermentation to lactate; (S)-lactate from pyruvate: step 1/1. Interconverts simultaneously and stereospecifically pyruvate and lactate with concomitant interconversion of NADH and NAD(+). The sequence is that of L-lactate dehydrogenase A chain (LDHA) from Oryctolagus cuniculus (Rabbit).